Reading from the N-terminus, the 430-residue chain is Enolase (430 aa).

Gln164 provides a ligand contact to (2R)-2-phosphoglycerate. The Proton donor role is filled by Glu208. Mg(2+)-binding residues include Asp245, Glu288, and Asp315. (2R)-2-phosphoglycerate-binding residues include Lys340, Arg369, Ser370, and Lys391. Catalysis depends on Lys340, which acts as the Proton acceptor.

Belongs to the enolase family. The cofactor is Mg(2+).

Its subcellular location is the cytoplasm. It localises to the secreted. It is found in the cell surface. The catalysed reaction is (2R)-2-phosphoglycerate = phosphoenolpyruvate + H2O. Its pathway is carbohydrate degradation; glycolysis; pyruvate from D-glyceraldehyde 3-phosphate: step 4/5. Its function is as follows. Catalyzes the reversible conversion of 2-phosphoglycerate (2-PG) into phosphoenolpyruvate (PEP). It is essential for the degradation of carbohydrates via glycolysis. The protein is Enolase of Pyrococcus furiosus (strain ATCC 43587 / DSM 3638 / JCM 8422 / Vc1).